Reading from the N-terminus, the 155-residue chain is Fibroblast growth factor 1 (155 aa).

N-acetylalanine is present on Ala2. Positions 24–27 (KKPK) match the Nuclear localization signal motif. Heparin-binding positions include 24–28 (KKPKL) and 113–116 (ISKK).

This sequence belongs to the heparin-binding growth factors family. As to quaternary structure, monomer. Homodimer. Interacts with FGFR1, FGFR2, FGFR3 and FGFR4. Affinity between fibroblast growth factors (FGFs) and their receptors is increased by heparan sulfate glycosaminoglycans that function as coreceptors. Found in a complex with FGFBP1, FGF1 and FGF2. Interacts with FGFBP1. Part of a Cu(2+)-dependent multiprotein aggregate containing FGF1, S100A13 and SYT1. Interacts with S100A13. Interacts with FGFBP1. Interacts with LRRC59. Interacts with CSNKA, CSNKB and FIBP. While binding with LRRC59, CSNKA and FIBP seem mutually exclusive, CSNKB and FIBP may cooperatively interact with FGF1. Interacts with SYT1. Forms a ternary complex with FGFR1 and ITGAV:ITGB3 and induces the recruitment of PTPN11 to the complex. In the nucleus, phosphorylated by PKC/PRKCD.

It localises to the secreted. It is found in the cytoplasm. The protein localises to the cell cortex. The protein resides in the cytosol. Its subcellular location is the nucleus. Plays an important role in the regulation of cell survival, cell division, angiogenesis, cell differentiation and cell migration. Functions as a potent mitogen in vitro. Acts as a ligand for FGFR1 and integrins. Binds to FGFR1 in the presence of heparin leading to FGFR1 dimerization and activation via sequential autophosphorylation on tyrosine residues which act as docking sites for interacting proteins, leading to the activation of several signaling cascades. Binds to integrin ITGAV:ITGB3. Its binding to integrin, subsequent ternary complex formation with integrin and FGFR1, and the recruitment of PTPN11 to the complex are essential for FGF1 signaling. Induces the phosphorylation and activation of FGFR1, FRS2, MAPK3/ERK1, MAPK1/ERK2 and AKT1. Can induce angiogenesis. The protein is Fibroblast growth factor 1 (FGF1) of Bos taurus (Bovine).